Reading from the N-terminus, the 433-residue chain is MRMVDIIIKKQNGKELTTEEIQFFVNGYTDGSIPDYQASALAMAIFFQDMSDRERADLTMAMVNSGETIDLSAIEGIKVDKHSTGGVGDTTTLVLAPLVAALDVPVAKMSGRGLGHTGGTIDKLEAIMGFHVELTKDEFIKLVNRDKVAVIGQSGNLTPADKKLYALRDVTGTVNSIPLIASSIMSKKIAAGADAIVLDVKTGAGAFMKTEEDAAELAKAMVRIGNNVGRQTMAVISDMSQPLGFAIGNALEVKEAIDTLKGEGPEDLHELVLTLGSQMVVLAKKADTLDEARAKLEEVMKNGKALEKFKDFLKNQGGDSSIVDDPSKLPQAAYQIDVPAKEAGVVSEIVADEIGVAAMLLGAGRATKEDEIDLAVGIMLRKKVGDKVEKGEPLVTLYANRENVDEVIAKVYDNIRIAAEAKAPKLIHTLITE.

81–83 contacts phosphate; that stretch reads KHS. Positions 88 and 90 each coordinate K(+). Residues Thr92, 108–110, and Thr120 each bind phosphate; that span reads KMS. Substrate is bound by residues Arg168 and Lys187. 3 residues coordinate K(+): Leu243, Ala246, and Glu255.

It belongs to the thymidine/pyrimidine-nucleoside phosphorylase family. As to quaternary structure, homodimer. K(+) is required as a cofactor.

The enzyme catalyses uridine + phosphate = alpha-D-ribose 1-phosphate + uracil. The catalysed reaction is thymidine + phosphate = 2-deoxy-alpha-D-ribose 1-phosphate + thymine. It catalyses the reaction 2'-deoxyuridine + phosphate = 2-deoxy-alpha-D-ribose 1-phosphate + uracil. Its function is as follows. Catalyzes phosphorolysis of the pyrimidine nucleosides uridine, thymidine and 2'-deoxyuridine with the formation of the corresponding pyrimidine base and ribose-1-phosphate. The protein is Pyrimidine-nucleoside phosphorylase of Bacillus subtilis (strain 168).